A 286-amino-acid chain; its full sequence is Hypersensitive-induced response protein 1 (286 aa).

Glycine 2 carries N-myristoyl glycine lipidation. Positions 114–190 form a coiled coil; that stretch reads LDDVFEQKND…EKILQIKRAE (77 aa).

As to quaternary structure, self-interacts and forms heteromers. Interacts with NB-LRR class of R proteins before R proteins (e.g. RPS2 or RPM1) are activated by the effectors. Interacts with LRR1.

The protein resides in the cell membrane. Functionally, positive regulator of hypersensitive response (HR)-like cell death. May be involved in potassium ion channel regulation. This is Hypersensitive-induced response protein 1 from Arabidopsis thaliana (Mouse-ear cress).